The following is a 73-amino-acid chain: Probable movement protein p8 (73 aa).

Residues 1–12 (MSTVETPAQDTL) show a composition bias toward polar residues. A disordered region spans residues 1 to 48 (MSTVETPAQDTLATKEPNKTGAKDRQQARSARLSVAAGAGRTALSQRD). Positions 16 to 27 (EPNKTGAKDRQQ) are enriched in basic and acidic residues.

The protein belongs to the carmovirus/necrovirus/panicovirus movement protein p8 family.

The protein localises to the host cell wall. Functionally, cell-to-cell movement. In Muhlenbergia (Blackwell switchgrass), this protein is Probable movement protein p8.